The sequence spans 13041 residues: Nonribosomal peptide synthetase kk1B (13041 aa).

An adenylation 1 region spans residues 267-663; that stretch reads ANRVVDTPQK…GRRDSQIKIR (397 aa). In terms of domain architecture, Carrier 1 spans 788–864; sequence ASLMTEGITL…GLINVMQQSS (77 aa). Residue Ser825 is modified to O-(pantetheine 4'-phosphoryl)serine. The condensation 1 stretch occupies residues 882 to 1313; sequence SFAQGRLWFL…TPIAHLQLTD (432 aa). Positions 1341-1736 are adenylation 2; that stretch reads FQKQVAACPN…GRMDFQIKIR (396 aa). One can recognise a Carrier 2 domain in the interval 1865–1939; the sequence is AARNEIEAVL…NLAATIKRGS (75 aa). Ser1899 carries the post-translational modification O-(pantetheine 4'-phosphoryl)serine. The interval 1957–2383 is condensation 2; the sequence is SFAQGRLWFL…DQPQTPLALL (427 aa). Residues 2418 to 2812 form an adenylation 3 region; the sequence is QVAASPNATA…GRMDQQIKIR (395 aa). Residues 2891 to 3023 are methyltransferase (M) domain 1; that stretch reads VGNDFMGWTS…EYLSKVLYAL (133 aa). In terms of domain architecture, Carrier 3 spans 3353–3427; sequence GARNETEAVL…DLAASIRRGS (75 aa). At Ser3387 the chain carries O-(pantetheine 4'-phosphoryl)serine. The condensation 3 stretch occupies residues 3445-3869; the sequence is SFAQGRLWFL…DQPQIPIAVL (425 aa). Residues 3901–4300 form an adenylation 4 region; sequence FRAQVVACPD…GRMDQQVKIR (400 aa). One can recognise a Carrier 4 domain in the interval 4412–4486; it reads PPRNEIETIL…NLAAAVQRGS (75 aa). Ser4446 is modified (O-(pantetheine 4'-phosphoryl)serine). The segment at 4504-4935 is condensation 4; it reads SFAQGRLWFL…TPIAALSLTD (432 aa). Residues 4963–5362 form an adenylation 5 region; the sequence is FREQVATYPD…GRMDRQLKIR (400 aa). Residues 5430–5567 are methyltransferase (M) domain 2; the sequence is TYAELDTLVK…VAQYFPTPEY (138 aa). Residues 5897-5971 enclose the Carrier 5 domain; the sequence is QPRNEVEAVL…DLAAAIQRGS (75 aa). The residue at position 5931 (Ser5931) is an O-(pantetheine 4'-phosphoryl)serine. Positions 5989–6416 are condensation 5; the sequence is SYAQGRLWFL…DQPQTPLALL (428 aa). Residues 6451–6845 form an adenylation 6 region; that stretch reads QVAASPNATA…GRMDQQIKIR (395 aa). The tract at residues 6924 to 7056 is methyltransferase (M) domain 3; it reads VGNDFMGWTS…EYLSKVLYAL (133 aa). The Carrier 6 domain maps to 7386–7460; it reads GARNEIEAAL…DLAGAVQRGS (75 aa). At Ser7420 the chain carries O-(pantetheine 4'-phosphoryl)serine. The interval 7478 to 7901 is condensation 6; it reads SFAQGRLWFL…GLETPRLPIS (424 aa). The adenylation 7 stretch occupies residues 7934-8335; sequence FRTQVAASPD…GRMDRQLKIR (402 aa). Positions 8404 to 8540 are methyltransferase (M) domain 4; that stretch reads YAEIEEIDSS…AQYFPSPEYL (137 aa). Residues 8871-8945 form the Carrier 7 domain; sequence GPRNEIEALL…DLAASIQRGS (75 aa). Ser8905 bears the O-(pantetheine 4'-phosphoryl)serine mark. The condensation 7 stretch occupies residues 8963 to 9392; that stretch reads SFAQGRLWFL…PKTPIAVLPL (430 aa). The tract at residues 9422–9822 is adenylation 8; sequence FRQQVAARPD…SRMDQQVKIR (401 aa). Positions 9943 to 10017 constitute a Carrier 8 domain; it reads PPTNDMERIL…DLASTIKQDS (75 aa). Residue Ser9977 is modified to O-(pantetheine 4'-phosphoryl)serine. Residues 10035 to 10462 form a condensation 8 region; sequence SFAQGRLWFL…ETPQTPLAVL (428 aa). The adenylation 9 stretch occupies residues 10494–10892; that stretch reads FRAQVAACPD…GRMDQQIKIR (399 aa). The interval 10959-11105 is methyltransferase (M) domain 5; it reads IYAEIEEIDS…EYLADVVGAL (147 aa). One can recognise a Carrier 9 domain in the interval 11428 to 11502; that stretch reads SARNEVEAVL…DLAASIERNS (75 aa). At Ser11462 the chain carries O-(pantetheine 4'-phosphoryl)serine. The condensation 9 stretch occupies residues 11520–11945; it reads SFAQGRLWFL…EQPQTPIAVL (426 aa). Residues 11977 to 12377 form an adenylation 10 region; sequence FRDQVAANPR…GRMDQQIKIR (401 aa). In terms of domain architecture, Carrier 10 spans 12495–12569; it reads VPRNELEASL…DLALKVSSYI (75 aa). O-(pantetheine 4'-phosphoryl)serine is present on Ser12529. Residues 12647 to 13032 form a condensation 10 region; the sequence is FPANADCDKI…RMHEEFCDII (386 aa).

The protein belongs to the NRP synthetase family.

The protein operates within secondary metabolite biosynthesis. Its function is as follows. Nonribosomal peptide synthetase; part of the gene cluster that mediates the biosynthesis of KK-1, a novel cyclic depsipeptide with 10 residues which is a promising active compound with high activity against many plant pathogens, especially Botrytis cinerea. The nonribosomal peptide synthetase (NRPS) kk1B catalyzes the elongation and cyclization of the decapeptide chain composed of 1 D-lactic acid residue (D-Lac), 1 pipecolic acid residue (Pip), 1 aspartic acid residue (Asp), 1 isoleucine residue (Ile), 1 glycine residue (Gly), 1 tyrosine residue (Tyr) and 4 valine residues (Val). The Asp, Ile and 3 Val residues are N-methylated by the 5 methyltransferase domains from the NRPS (found in modules 3, 5, 6, 7 and 9), whereas the Tyr residue is O-methylated by the cluster encoded O-methyltransferase kk1A. Cyclization with the hydroxy group of the D-lactic acid as a nucleophile is presumed to occur in the final module of NRPS, resulting in the formation of the depsipeptide ester bond through macrocyclization by the C-terminal C domain. The thioesterase kk1J is likely to be involved in the corrective mechanism of peptide chain synthesis. The D-lactate dehydrogenase kk1H is involved in the synthesis of D-lactic acid from pyruvic acid, which is recognized by the A domain of the first kk1B module. The pyrroline-5-carboxylate reductase kk1I is involved in the synthesis of the L-pipecolic acid residue of KK-1 from delta-1-pyrroline-5-carboxylate (P5C), a metabolic intermediate of lysine. It is still unclear how kk1C and kk1D are involved in the production of KK-1. This Curvularia clavata protein is Nonribosomal peptide synthetase kk1B.